The chain runs to 201 residues: uncharacterized protein (201 aa).

This is an uncharacterized protein from Caenorhabditis elegans.